Consider the following 232-residue polypeptide: UPF0758 protein BH3032 (232 aa).

The MPN domain occupies 107 to 229 (VIRTPEDVSR…FVSLKEKGHL (123 aa)). 3 residues coordinate Zn(2+): His-178, His-180, and Asp-191. A JAMM motif motif is present at residues 178 to 191 (HNHPSGDPTPSRED).

This sequence belongs to the UPF0758 family.

This is UPF0758 protein BH3032 from Halalkalibacterium halodurans (strain ATCC BAA-125 / DSM 18197 / FERM 7344 / JCM 9153 / C-125) (Bacillus halodurans).